A 486-amino-acid polypeptide reads, in one-letter code: Malonate-semialdehyde dehydrogenase 1 (486 aa).

Residues Phe-154, Lys-178, Glu-181, Arg-182, and Ser-231 each coordinate NAD(+). Catalysis depends on Cys-286, which acts as the Nucleophile. NAD(+) is bound at residue Glu-386.

The protein belongs to the aldehyde dehydrogenase family. IolA subfamily. As to quaternary structure, homotetramer.

It catalyses the reaction 3-oxopropanoate + NAD(+) + CoA + H2O = hydrogencarbonate + acetyl-CoA + NADH + H(+). It carries out the reaction 2-methyl-3-oxopropanoate + NAD(+) + CoA + H2O = propanoyl-CoA + hydrogencarbonate + NADH + H(+). Its pathway is polyol metabolism; myo-inositol degradation into acetyl-CoA; acetyl-CoA from myo-inositol: step 7/7. Catalyzes the oxidation of malonate semialdehyde (MSA) and methylmalonate semialdehyde (MMSA) into acetyl-CoA and propanoyl-CoA, respectively. Is involved in a myo-inositol catabolic pathway. Bicarbonate, and not CO2, is the end-product of the enzymatic reaction. This chain is Malonate-semialdehyde dehydrogenase 1, found in Bacillus anthracis.